Consider the following 677-residue polypeptide: Galactocerebrosidase (677 aa).

The first 33 residues, 1 to 33 (MGTVPAGSRRAPGCGEGMFILCLALLLAPGAPA), serve as a signal peptide directing secretion. 3 residues coordinate substrate: threonine 101, tryptophan 143, and asparagine 189. Residue glutamate 190 is the Proton donor/acceptor of the active site. Glutamate 265 functions as the Nucleophile in the catalytic mechanism. The cysteines at positions 278 and 385 are disulfide-linked. Residues asparagine 291, asparagine 370, and asparagine 381 are each glycosylated (N-linked (GlcNAc...) asparagine). A substrate-binding site is contributed by arginine 387. N-linked (GlcNAc...) asparagine glycans are attached at residues asparagine 394, asparagine 399, asparagine 424, asparagine 441, asparagine 509, asparagine 549, and asparagine 630.

The protein belongs to the glycosyl hydrolase 59 family.

It localises to the lysosome. It catalyses the reaction a beta-D-galactosyl-(1&lt;-&gt;1')-N-acylsphing-4-enine + H2O = an N-acylsphing-4-enine + D-galactose. It carries out the reaction beta-D-galactosyl-(1&lt;-&gt;1)-sphing-4-enine + H2O = sphing-4-enine + D-galactose. The enzyme catalyses a D-galactosylceramide + H2O = an N-acyl-sphingoid base + D-galactose. Hydrolyzes the galactose ester bonds of glycolipids such as galactosylceramide and galactosylsphingosine. The sequence is that of Galactocerebrosidase from Xenopus laevis (African clawed frog).